The following is a 39-amino-acid chain: Bacteriocin SRCAM 602 (39 aa).

It belongs to the bacteriocin class IIA/YGNGV family.

It localises to the secreted. In terms of biological role, bacteriocin with antibacterial activity against C.jejuni. This is Bacteriocin SRCAM 602 from Paenibacillus polymyxa (Bacillus polymyxa).